The sequence spans 1345 residues: MKEATDDYDLSKLVSNFYRLEKITKINYAQYLPKKQNDQWGIQMEIQMRKKDRKLLVALLSKELWCFSINDQVLPSPNDIDPELNVSADKTGSFTADYSKPNLPPHYALFLKSLKRMIYLNLVEQSKNTLVQFGNSCINITKNNESNNLLQIEPHLFSNSELAISICVKDLGLLPLKVNSIDPAFLSSHALYMAPSGVRVYLVENKNDNSGTNQEHLHKYLVPVPENGEVLLKTLYASHGIKLNSSTCQWVNIIPNITHLNGRAPNISQYMDLPKELRTIVWPLDLVFAQPALDIDSSTTLSQINGLDTFEDTLSLIDNFLQLKQSSSYRTPGSSGGLTGTNIGTNVFSSEGAYTDQFQVYPKSQTNQQQTSSNSKVSPSDAASPYPGIDKIIEQKQFTPDFMASPSVSGNSNELFNDRKNGHTDLLISPSKMDVDTDFPGSNLAGQEAPSQPASDVKKSSVSASDSELFGEEDEDEDDADLFGESNNDSTGESNANNSKGEITEDIFASSDDESSLQPKKESTFYDGIKNGSAESGLNMQDRANLKRTYLDIRIEETPLSSPLYTDPGAPLPVETPRDRRKSVFAPLNFNPIIAKDVDNKYKNGGKYSFSPLQKEEALNFDVSRTELSSSEGEDSESSDDELEDLANKNDGVVYDKAENIGYKTFANLQDSVPPGLIKQDFLGNPYLASLEGSKEGQNTIWKMPQTDIAQTESPLKAIDTSIGPDGTLPNTTSSEQSKSVYVHDYGISPTKMSNDPAFDTAKIEGKYEFMNNFPSSFPFLLRHMPLSLIPDTFKHLNPTITVNERNNQIIDLLAEQIVYDYNILGNLTIPDVPYSGIRNYSNGVVKNTIDNLFSEFTRLDGTTLISRLYPMETPFVSVRKQHDQIKLRSDVQQFTKYANLKPVRGIKNFKFLVLTDSFKEDCIQFISSLSQTYINHELGFCEHLQLTNEDSKGLIYLKDFEDSKLLLLAAQIVSYLSTNRTSGKEVAFMMIIPVQRCDISELVEKTAKFQIIQNEVKAKIPSMELYLKIVPMDFIKSPLTSVDDYTNLCISIYNILPNKMIKFTHIRKQIPEKLTFKTSQQASAFKYDAYIHLAYSRSVDKQWMFAALSDSAGKENMMKTWYLGSSKNKFDEACNHIWEMALSLAGKNYGKVCLILTRLNGILPDDELMNWRRLSGRNIHLAVVCVDDNTKISFFDRNESYPSYKRLYQNANSIETLVDPERIDDYLIRDLDQDIHGVIFENPFPLVNSLHRCAIKSGALVKFNVSTTATEPHSLDKFEVNLLNCPHSDSFKLLETILEEFRNLAALNVWFGITNGENGHIPWHVLAVKKMMKTLVHTRVKVAQ.

Disordered stretches follow at residues 363–387 (KSQTNQQQTSSNSKVSPSDAASPYP) and 402–537 (FMAS…AESG). A compositionally biased stretch (low complexity) spans 364–375 (SQTNQQQTSSNS). Residues 406–415 (PSVSGNSNEL) are compositionally biased toward polar residues. The span at 469–482 (LFGEEDEDEDDADL) shows a compositional bias: acidic residues. Over residues 486-501 (SNNDSTGESNANNSKG) the composition is skewed to polar residues.

It belongs to the Mediator complex subunit 13 family. In terms of assembly, component of the SRB8-11 complex, which itself associates with the Mediator complex.

It is found in the nucleus. Its function is as follows. Component of the SRB8-11 complex. The SRB8-11 complex is a regulatory module of the Mediator complex which is itself involved in regulation of basal and activated RNA polymerase II-dependent transcription. The SRB8-11 complex may be involved in the transcriptional repression of a subset of genes regulated by Mediator. It may inhibit the association of the Mediator complex with RNA polymerase II to form the holoenzyme complex. The polypeptide is Mediator of RNA polymerase II transcription subunit 13 (SSN2) (Candida glabrata (strain ATCC 2001 / BCRC 20586 / JCM 3761 / NBRC 0622 / NRRL Y-65 / CBS 138) (Yeast)).